The sequence spans 260 residues: Thrombin-like enzyme flavoxobin (260 aa).

An N-terminal signal peptide occupies residues Met1 to Ala18. A propeptide spanning residues Gln19 to Leu24 is cleaved from the precursor. Positions Val25–Ala251 constitute a Peptidase S1 domain. 6 disulfide bridges follow: Cys31–Cys165, Cys52–Cys68, Cys100–Cys258, Cys144–Cys212, Cys176–Cys191, and Cys202–Cys227. Residues His67 and Asp112 each act as charge relay system in the active site. Ser206 acts as the Charge relay system in catalysis.

This sequence belongs to the peptidase S1 family. Snake venom subfamily. In terms of assembly, monomer. Expressed by the venom gland.

The protein localises to the secreted. The catalysed reaction is Selective cleavage of Arg-|-Xaa bond in fibrinogen, to form fibrin, and release fibrinopeptide A. The specificity of further degradation of fibrinogen varies with species origin of the enzyme.. Its activity is regulated as follows. Inhibited by alpha(2)-macroglobulin, diisopropylfluorophosphate (DFP) and PMSF. Low inhibition by tosyl-L-lysine chloromethyl ketone. Functionally, thrombin-like snake venom serine protease that clots fibrinogen (FGA) by releasing fibrinopeptide A. According to PubMed:8585090, only cleaves rabbit fibrinogen, whereas no specificity is described in PubMed:3910643 (tests done on bovine fibrinogen). Also acts as a C3 convertase that independently cleaves human C3 and kick-starts the complement cascade. Also increases urokinase-type plasminogen activator (PLAU) and plasminogen activator inhibitor (SERPINE1) in cultured bovine pulmonary artery endothelial cells. Dose-dependently inhibits collagen-induced platelet aggregation. This is Thrombin-like enzyme flavoxobin (TLF1) from Protobothrops flavoviridis (Habu).